The sequence spans 294 residues: Eukaryotic translation initiation factor 3 subunit F (294 aa).

The MPN domain occupies 7–155 (VNVHPGVYMN…VRAYLRSKAG (149 aa)).

Belongs to the eIF-3 subunit F family. Component of the eukaryotic translation initiation factor 3 (eIF-3) complex.

It is found in the cytoplasm. In terms of biological role, component of the eukaryotic translation initiation factor 3 (eIF-3) complex, which is involved in protein synthesis of a specialized repertoire of mRNAs and, together with other initiation factors, stimulates binding of mRNA and methionyl-tRNAi to the 40S ribosome. The eIF-3 complex specifically targets and initiates translation of a subset of mRNAs involved in cell proliferation. The polypeptide is Eukaryotic translation initiation factor 3 subunit F (Caenorhabditis elegans).